We begin with the raw amino-acid sequence, 487 residues long: Phenylalanine--tRNA ligase alpha subunit (487 aa).

L-phenylalanine contacts are provided by residues threonine 319, 361-363, and tyrosine 401; that span reads QVE. A Mg(2+)-binding site is contributed by glutamate 403. Residue phenylalanine 427 participates in L-phenylalanine binding.

This sequence belongs to the class-II aminoacyl-tRNA synthetase family. Phe-tRNA synthetase alpha subunit type 2 subfamily. In terms of assembly, tetramer of two alpha and two beta subunits. Requires Mg(2+) as cofactor.

It is found in the cytoplasm. It catalyses the reaction tRNA(Phe) + L-phenylalanine + ATP = L-phenylalanyl-tRNA(Phe) + AMP + diphosphate + H(+). This chain is Phenylalanine--tRNA ligase alpha subunit (phesA), found in Dictyostelium discoideum (Social amoeba).